The primary structure comprises 133 residues: Lymphocyte antigen 6 complex locus protein G6d (133 aa).

Residues 1–19 form the signal peptide; it reads MKPQFVGILLSSLLGAALG. In terms of domain architecture, UPAR/Ly6 spans 22-116; that stretch reads MRCYNCGGSP…ASHVAPAGIL (95 aa). A disulfide bridge connects residues Cys-27 and Cys-35. O-linked (GalNAc...) threonine glycans are attached at residues Thr-40 and Thr-41. 2 disulfides stabilise this stretch: Cys-42–Cys-71 and Cys-77–Cys-96. Residue Ser-104 is the site of GPI-anchor amidated serine attachment. Positions 105-133 are cleaved as a propeptide — removed in mature form; it reads AVASHVAPAGILAAAATALTCLLPGLWSG.

In terms of assembly, homodimer. O-glycosylated. As to expression, expressed in the adult lung, and in fetal liver, lung, kidney, brain and spleen.

Its subcellular location is the cell membrane. The protein resides in the cell projection. It is found in the filopodium. The sequence is that of Lymphocyte antigen 6 complex locus protein G6d (LY6G6D) from Homo sapiens (Human).